Consider the following 78-residue polypeptide: Translation initiation factor IF-1 (78 aa).

The region spanning 2–78 is the S1-like domain; it reads SKNNLNETES…TQARITYRFK (77 aa).

It belongs to the IF-1 family. Component of the 30S ribosomal translation pre-initiation complex which assembles on the 30S ribosome in the order IF-2 and IF-3, IF-1 and N-formylmethionyl-tRNA(fMet); mRNA recruitment can occur at any time during PIC assembly.

The protein resides in the cytoplasm. In terms of biological role, one of the essential components for the initiation of protein synthesis. Stabilizes the binding of IF-2 and IF-3 on the 30S subunit to which N-formylmethionyl-tRNA(fMet) subsequently binds. Helps modulate mRNA selection, yielding the 30S pre-initiation complex (PIC). Upon addition of the 50S ribosomal subunit IF-1, IF-2 and IF-3 are released leaving the mature 70S translation initiation complex. The sequence is that of Translation initiation factor IF-1 from Aster yellows witches'-broom phytoplasma (strain AYWB).